The following is a 271-amino-acid chain: Chymotrypsin BII (271 aa).

Positions 1–15 (MIGKLSLLLVCVAVA) are cleaved as a signal peptide. A propeptide spans 16–45 (SGNPAAGKPWHWKSPKPLVDPRIHVNATPR) (activation peptide). The Peptidase S1 domain occupies 46 to 268 (IVGGVEATPH…YLDWIEQKTG (223 aa)). Cys71 and Cys87 form a disulfide bridge. Catalysis depends on charge relay system residues His86 and Asp132. Cystine bridges form between Cys196-Cys209 and Cys219-Cys245. The Charge relay system role is filled by Ser223.

Belongs to the peptidase S1 family.

It is found in the secreted. The protein resides in the extracellular space. It catalyses the reaction Preferential cleavage: Tyr-|-Xaa, Trp-|-Xaa, Phe-|-Xaa, Leu-|-Xaa.. In terms of biological role, serine protease with chymotryptic and collagenolytic activities. The polypeptide is Chymotrypsin BII (Penaeus vannamei (Whiteleg shrimp)).